A 321-amino-acid chain; its full sequence is Nucleus-vacuole junction protein 1 (321 aa).

The signal sequence occupies residues Met-1–Gly-22. The TSC13-binding stretch occupies residues Glu-73–Asn-125. The chain crosses the membrane as a helical span at residues Ile-94 to Gly-114. The interval Lys-139–Asn-195 is OSH1-binding. 2 positions are modified to phosphoserine: Ser-156 and Ser-199. Positions Leu-211 to Ile-275 are disordered. The interval Asp-233 to Tyr-321 is VAC8-binding. Residues Ser-242 to Arg-262 show a composition bias toward basic and acidic residues. Residues Thr-263–Ser-272 are compositionally biased toward low complexity. Ser-285 and Ser-298 each carry phosphoserine. Residues Pro-299–Tyr-321 form a disordered region.

Interacts with OSH1, TSC13 and VAC8.

Its subcellular location is the nucleus outer membrane. In terms of biological role, involved in the formation of nucleus-vacuole junctions (NVJs) during piecemeal microautophagy of the nucleus (PMN). NVJs are interorganelle interfaces mediated by NVJ1 in the nuclear envelope and VAC8 on the vacuole membrane. Together, NVJ1 and VAC8 form Velcro-like patches through which teardrop-like portions of the nucleus are pinched off into the vacuolar lumen and degraded by the PMN process. Also acts as an outer-nuclear membrane receptor for OSH1 and TSC13. This is Nucleus-vacuole junction protein 1 (NVJ1) from Saccharomyces cerevisiae (strain ATCC 204508 / S288c) (Baker's yeast).